Here is a 122-residue protein sequence, read N- to C-terminus: UPF0102 protein Krad_1407 (122 aa).

It belongs to the UPF0102 family.

The chain is UPF0102 protein Krad_1407 from Kineococcus radiotolerans (strain ATCC BAA-149 / DSM 14245 / SRS30216).